An 87-amino-acid polypeptide reads, in one-letter code: MVSLMKLWIPMLMTFFCTVLLSVLGEMRKKRYDRKELLLEECWGKPNVKECTNKCSKAFRCKDKNYTCCWTYCGNICWINVETSGDY.

The first 25 residues, 1 to 25 (MVSLMKLWIPMLMTFFCTVLLSVLG), serve as a signal peptide directing secretion.

The protein resides in the secreted. The chain is Protein WFDC11 (WFDC11) from Homo sapiens (Human).